A 319-amino-acid polypeptide reads, in one-letter code: Beta-ketoacyl-[acyl-carrier-protein] synthase III (319 aa).

Active-site residues include C113 and H246. Residues 247 to 251 (QANLR) form an ACP-binding region. The active site involves N276.

This sequence belongs to the thiolase-like superfamily. FabH family. In terms of assembly, homodimer.

It localises to the cytoplasm. The catalysed reaction is malonyl-[ACP] + acetyl-CoA + H(+) = 3-oxobutanoyl-[ACP] + CO2 + CoA. Its pathway is lipid metabolism; fatty acid biosynthesis. Functionally, catalyzes the condensation reaction of fatty acid synthesis by the addition to an acyl acceptor of two carbons from malonyl-ACP. Catalyzes the first condensation reaction which initiates fatty acid synthesis and may therefore play a role in governing the total rate of fatty acid production. Possesses both acetoacetyl-ACP synthase and acetyl transacylase activities. Its substrate specificity determines the biosynthesis of branched-chain and/or straight-chain of fatty acids. This Chromobacterium violaceum (strain ATCC 12472 / DSM 30191 / JCM 1249 / CCUG 213 / NBRC 12614 / NCIMB 9131 / NCTC 9757 / MK) protein is Beta-ketoacyl-[acyl-carrier-protein] synthase III.